Reading from the N-terminus, the 187-residue chain is Elongation factor P (187 aa).

The protein belongs to the elongation factor P family.

Its subcellular location is the cytoplasm. It participates in protein biosynthesis; polypeptide chain elongation. Involved in peptide bond synthesis. Stimulates efficient translation and peptide-bond synthesis on native or reconstituted 70S ribosomes in vitro. Probably functions indirectly by altering the affinity of the ribosome for aminoacyl-tRNA, thus increasing their reactivity as acceptors for peptidyl transferase. The protein is Elongation factor P of Gloeobacter violaceus (strain ATCC 29082 / PCC 7421).